The following is a 174-amino-acid chain: Adenine phosphoribosyltransferase (174 aa).

This sequence belongs to the purine/pyrimidine phosphoribosyltransferase family. As to quaternary structure, homodimer.

Its subcellular location is the cytoplasm. The catalysed reaction is AMP + diphosphate = 5-phospho-alpha-D-ribose 1-diphosphate + adenine. It functions in the pathway purine metabolism; AMP biosynthesis via salvage pathway; AMP from adenine: step 1/1. Catalyzes a salvage reaction resulting in the formation of AMP, that is energically less costly than de novo synthesis. In Mycolicibacterium vanbaalenii (strain DSM 7251 / JCM 13017 / BCRC 16820 / KCTC 9966 / NRRL B-24157 / PYR-1) (Mycobacterium vanbaalenii), this protein is Adenine phosphoribosyltransferase.